A 424-amino-acid chain; its full sequence is Type II methyltransferase M.XorII (424 aa).

One can recognise an SAM-dependent MTase C5-type domain in the interval 4 to 367; the sequence is PIGIDLFAGA…GQIMKALRKK (364 aa). Residue Cys83 is part of the active site. A disordered region spans residues 404-424; that stretch reads RSRPVDRPAPRRHEERELVTA. Residues 406–424 are compositionally biased toward basic and acidic residues; the sequence is RPVDRPAPRRHEERELVTA.

It belongs to the class I-like SAM-binding methyltransferase superfamily. C5-methyltransferase family.

It carries out the reaction a 2'-deoxycytidine in DNA + S-adenosyl-L-methionine = a 5-methyl-2'-deoxycytidine in DNA + S-adenosyl-L-homocysteine + H(+). Functionally, a methylase that recognizes the double-stranded sequence 5'-CGATCG-3', methylates C-? on both strands and protects the DNA from cleavage by the XorII endonuclease. The chain is Type II methyltransferase M.XorII (xorIIM) from Xanthomonas oryzae pv. oryzae (strain KACC10331 / KXO85).